The chain runs to 463 residues: Aurantioclavine synthase cnsA (463 aa).

Positions 16–199 (ERFNQRGNVF…TQATVRVFPD (184 aa)) constitute an FAD-binding PCMH-type domain.

It belongs to the oxygen-dependent FAD-linked oxidoreductase family. It depends on FAD as a cofactor.

The protein operates within alkaloid biosynthesis. In terms of biological role, FAD-linked oxidoreductase; part of the gene cluster that mediates the biosynthesis of communesins, a prominent class of indole alkaloids with great potential as pharmaceuticals. Communesins are biosynthesized by the coupling of tryptamine and aurantioclavine, two building blocks derived from L-tryptophan. The L-tryptophan decarboxylase cnsB converts L-tryptophan to tryptamine, whereas the tryptophan dimethylallyltransferase cnsF converts L-tryptophan to 4-dimethylallyl tryptophan which is further transformed to aurantioclavine by the aurantioclavine synthase cnsA, probably aided by the catalase cnsD. The cytochrome P450 monooxygenase cnsC catalyzes the heterodimeric coupling between the two different indole moieties, tryptamine and aurantioclavine, to construct vicinal quaternary stereocenters and yield the heptacyclic communesin scaffold. The O-methyltransferase cnsE then methylates the communesin scaffold to produce communesin K, the simplest characterized communesin that contains the heptacyclic core. The dioxygenase cnsJ converts communesin K into communesin I. Acylation to introduce the hexadienyl group at position N16 of communesin I by the acyltransferase cnsK leads to the production of communesin B. The hexadienyl group is produced by the highly reducing polyketide synthase cnsI, before being hydrolytically removed from cnsI by the serine hydrolase cnsH, converted into hexadienyl-CoA by the CoA ligase cnsG, and then transferred to communesin I by cnsK. Surprisingly, cnsK may also be a promiscuous acyltransferase that can tolerate a range of acyl groups, including acetyl-, propionyl-, and butyryl-CoA, which lead to communesins A, G and H respectively. The roles of the alpha-ketoglutarate-dependent dioxygenases cnsM and cnsP have still to be determined. The protein is Aurantioclavine synthase cnsA of Penicillium expansum (Blue mold rot fungus).